Reading from the N-terminus, the 783-residue chain is Metabotropic glutamate receptor-like protein J (783 aa).

Residues 1-20 (MKILLYIAIILSFFSLITIS) form the signal peptide. The Extracellular portion of the chain corresponds to 21-383 (SECKIAVLLS…DYPNSLKYGV (363 aa)). Residues 56–85 (DFSIYYENLEESMEEAEKAFQDALHKGANL) adopt a coiled-coil conformation. N-linked (GlcNAc...) asparagine glycosylation is found at asparagine 181, asparagine 196, asparagine 256, asparagine 282, and asparagine 315. Residues 384–404 (TIVSGVCIFICLVCMTLVVVF) traverse the membrane as a helical segment. The Cytoplasmic portion of the chain corresponds to 405-415 (KKARVIKSSSP). A helical membrane pass occupies residues 416–436 (AFLLLILLGCCIIFAACILFA). At 437–443 (QSPTNQT) the chain is on the extracellular side. N-linked (GlcNAc...) asparagine glycosylation is present at asparagine 441. Residues 444–464 (CSARIWLLSLGYTLFLGNLLV) traverse the membrane as a helical segment. At 465-489 (KNWRIWLLFDNPKLKKRAITNWKLY) the chain is on the cytoplasmic side. Residues 490–510 (PWVFAILAIDVMILAIWQGLG) form a helical membrane-spanning segment. The Extracellular portion of the chain corresponds to 511–538 (NINAESRIGYDSLTQYQYKNVCSSDDQG). A helical membrane pass occupies residues 539–559 (SIALYLLLVFHGLVLLVACFI). Over 560 to 575 (SFKIKVVDIEEFNESK) the chain is Cytoplasmic. A helical membrane pass occupies residues 576 to 596 (PITTSVYIITFCLFIVIPLMV). At 597–604 (SPQSLTSQ) the chain is on the extracellular side. A helical membrane pass occupies residues 605–625 (TTIICVCAIVTTLISMLLLFG). The Cytoplasmic segment spans residues 626–783 (SKFYKMATQG…GETEIDSNNV (158 aa)). Low complexity predominate over residues 647–656 (KSSSKSSKSS). Disordered regions lie at residues 647–696 (KSSS…FSNK) and 731–783 (QLQQ…SNNV). Over residues 670–679 (GEDDTSDETS) the composition is skewed to acidic residues. Residues 763-783 (VLSKRISNQQNGETEIDSNNV) are compositionally biased toward polar residues.

In the N-terminal section; belongs to the BMP lipoprotein family. The protein in the C-terminal section; belongs to the G-protein coupled receptor 3 family. GABA-B receptor subfamily.

The protein localises to the cell membrane. It localises to the membrane. It is found in the endoplasmic reticulum membrane. Its subcellular location is the golgi apparatus membrane. The protein resides in the nucleus envelope. Functionally, may act during the development and be a negative regulator. In Dictyostelium discoideum (Social amoeba), this protein is Metabotropic glutamate receptor-like protein J (grlJ).